Consider the following 422-residue polypeptide: Succinate--CoA ligase [ADP-forming] subunit beta, mitochondrial (422 aa).

The transit peptide at 1–27 (MVRGSLGKLASRALSVAGKWQHQQLRR) directs the protein to the mitochondrion. Residues 36 to 279 (AELMGKYGIN…TTQEDPREVA (244 aa)) enclose the ATP-grasp domain. Residues K75, 82–84 (GRG), and E142 contribute to the ATP site. Residues N234 and D248 each coordinate Mg(2+). Residues N299 and 356 to 358 (GIM) contribute to the substrate site.

The protein belongs to the succinate/malate CoA ligase beta subunit family. Heterodimer of an alpha and a beta subunit. Requires Mg(2+) as cofactor.

It is found in the mitochondrion. It catalyses the reaction succinate + ATP + CoA = succinyl-CoA + ADP + phosphate. It participates in carbohydrate metabolism; tricarboxylic acid cycle; succinate from succinyl-CoA (ligase route): step 1/1. In terms of biological role, succinyl-CoA synthetase functions in the citric acid cycle (TCA), coupling the hydrolysis of succinyl-CoA to the synthesis of ATP and thus represents the only step of substrate-level phosphorylation in the TCA. The beta subunit provides nucleotide specificity of the enzyme and binds the substrate succinate, while the binding sites for coenzyme A and phosphate are found in the alpha subunit. This Oryza sativa subsp. japonica (Rice) protein is Succinate--CoA ligase [ADP-forming] subunit beta, mitochondrial.